We begin with the raw amino-acid sequence, 324 residues long: Aspartate carbamoyltransferase catalytic subunit (324 aa).

Residues Arg55 and Thr56 each contribute to the carbamoyl phosphate site. Lys83 serves as a coordination point for L-aspartate. Residues Arg105, His135, and Gln138 each coordinate carbamoyl phosphate. Arg173 and Arg227 together coordinate L-aspartate. Carbamoyl phosphate contacts are provided by Gly268 and Pro269.

It belongs to the aspartate/ornithine carbamoyltransferase superfamily. ATCase family. Heterododecamer (2C3:3R2) of six catalytic PyrB chains organized as two trimers (C3), and six regulatory PyrI chains organized as three dimers (R2).

It carries out the reaction carbamoyl phosphate + L-aspartate = N-carbamoyl-L-aspartate + phosphate + H(+). It participates in pyrimidine metabolism; UMP biosynthesis via de novo pathway; (S)-dihydroorotate from bicarbonate: step 2/3. Catalyzes the condensation of carbamoyl phosphate and aspartate to form carbamoyl aspartate and inorganic phosphate, the committed step in the de novo pyrimidine nucleotide biosynthesis pathway. This chain is Aspartate carbamoyltransferase catalytic subunit, found in Nocardioides sp. (strain ATCC BAA-499 / JS614).